Here is a 399-residue protein sequence, read N- to C-terminus: Developmentally-regulated G-protein 1 (399 aa).

Residues 63–288 (GRVALIGFPS…LLARMWDEMG (226 aa)) enclose the OBG-type G domain. Residues 69-76 (GFPSVGKS), 115-119 (DLPGI), and 246-249 (NKID) each bind GTP. Residues 288-366 (GLVRVYSKPQ…EDEDVVQIVK (79 aa)) enclose the TGS domain. The segment at 367–399 (KKERDEGGRGRFKSHSNAPARIADREKKAPLKQ) is disordered. Basic and acidic residues predominate over residues 388-399 (IADREKKAPLKQ).

It belongs to the TRAFAC class OBG-HflX-like GTPase superfamily. OBG GTPase family. In terms of tissue distribution, expressed in actively growing tissues and reproductive organs. Mostly expressed in leaves, stems and siliques. Also present in flowers and flower buds, and, to a lower extent, in roots.

It is found in the cytoplasmic vesicle. Its subcellular location is the cytoplasm. In terms of biological role, binds GDP and GTP, and has low GTPase activity. May interact with phosphatidic acid (PA). The sequence is that of Developmentally-regulated G-protein 1 (DRG1) from Arabidopsis thaliana (Mouse-ear cress).